The sequence spans 644 residues: 3D-(3,5/4)-trihydroxycyclohexane-1,2-dione hydrolase 2 (644 aa).

E65 is a binding site for thiamine diphosphate. The segment at 442–522 is thiamine pyrophosphate binding; it reads SLPGDLQRMW…INVLLFDNSG (81 aa). D493 and N520 together coordinate Mg(2+).

The protein belongs to the TPP enzyme family. Mg(2+) is required as a cofactor. The cofactor is thiamine diphosphate.

It carries out the reaction 3D-3,5/4-trihydroxycyclohexane-1,2-dione + H2O = 5-deoxy-D-glucuronate + H(+). The protein operates within polyol metabolism; myo-inositol degradation into acetyl-CoA; acetyl-CoA from myo-inositol: step 3/7. Functionally, involved in the cleavage of the C1-C2 bond of 3D-(3,5/4)-trihydroxycyclohexane-1,2-dione (THcHDO) to yield 5-deoxy-glucuronate (5DG). This is 3D-(3,5/4)-trihydroxycyclohexane-1,2-dione hydrolase 2 from Bacillus cereus (strain ZK / E33L).